A 141-amino-acid chain; its full sequence is VLSAADKTAIKHLTGSLRTNAEAWGAESLARMFATTPSTKTYFSKFTDFSANGKRVKAHGGKVLNAVADATDHLDNVAGHLDPLAVLHGTTLCVDPHNFPLLTQCILVTLAAHLTELKPETHCALDKFLCEVATALGSHYR.

In terms of domain architecture, Globin spans 1 to 141 (VLSAADKTAI…VATALGSHYR (141 aa)). An O2-binding site is contributed by His59. Heme b is bound at residue His88.

It belongs to the globin family. Heterotetramer of two alpha chains and two beta chains. As to expression, red blood cells.

Functionally, involved in oxygen transport from the lung to the various peripheral tissues. In Squalus acanthias (Spiny dogfish), this protein is Hemoglobin subunit alpha (HBA).